The sequence spans 673 residues: UvrABC system protein B (673 aa).

Positions Ala-26 to Arg-183 constitute a Helicase ATP-binding domain. Gly-39–Thr-46 contributes to the ATP binding site. The Beta-hairpin signature appears at Tyr-92 to Ile-115. A Helicase C-terminal domain is found at Gln-431 to Met-597. The segment at Arg-601–Pro-631 is disordered. Over residues Gln-618–Lys-630 the composition is skewed to basic and acidic residues. The UVR domain maps to Ala-635 to Ala-670.

This sequence belongs to the UvrB family. Forms a heterotetramer with UvrA during the search for lesions. Interacts with UvrC in an incision complex.

The protein localises to the cytoplasm. Its function is as follows. The UvrABC repair system catalyzes the recognition and processing of DNA lesions. A damage recognition complex composed of 2 UvrA and 2 UvrB subunits scans DNA for abnormalities. Upon binding of the UvrA(2)B(2) complex to a putative damaged site, the DNA wraps around one UvrB monomer. DNA wrap is dependent on ATP binding by UvrB and probably causes local melting of the DNA helix, facilitating insertion of UvrB beta-hairpin between the DNA strands. Then UvrB probes one DNA strand for the presence of a lesion. If a lesion is found the UvrA subunits dissociate and the UvrB-DNA preincision complex is formed. This complex is subsequently bound by UvrC and the second UvrB is released. If no lesion is found, the DNA wraps around the other UvrB subunit that will check the other stand for damage. This Xanthomonas oryzae pv. oryzae (strain MAFF 311018) protein is UvrABC system protein B.